The sequence spans 692 residues: Zinc finger protein 180 (692 aa).

One can recognise a KRAB domain in the interval 72–145 (VNFKIVTVDF…GVKIERFTRD (74 aa)). Residues lysine 138, lysine 159, lysine 168, lysine 191, lysine 198, lysine 226, lysine 304, lysine 313, and lysine 330 each participate in a glycyl lysine isopeptide (Lys-Gly) (interchain with G-Cter in SUMO2) cross-link. C2H2-type zinc fingers lie at residues 353-375 (FECN…QRTH), 381-403 (YECS…QRTH), 409-431 (YRCN…QRTH), 437-459 (YECN…QRTH), 465-487 (YECN…QRIH), 493-515 (YECN…QRTH), 521-543 (FECN…QRTH), 549-571 (YECS…QRIH), 577-599 (YECN…QRTH), 605-627 (YECS…QRTH), 633-655 (FECN…QRTH), and 661-683 (FTCI…QATH).

It belongs to the krueppel C2H2-type zinc-finger protein family.

The protein resides in the nucleus. Functionally, may be involved in transcriptional regulation. This is Zinc finger protein 180 (ZNF180) from Homo sapiens (Human).